The primary structure comprises 134 residues: uncharacterized protein (134 aa).

This is an uncharacterized protein from Acanthamoeba polyphaga (Amoeba).